The chain runs to 254 residues: N-acetylglucosamine-induced protein 1 (254 aa).

It is found in the cytoplasm. Its function is as follows. N-acetylglucosamine-induced protein which plays a role in the N-acetylglucosamine metabolic pathway. The chain is N-acetylglucosamine-induced protein 1 from Candida albicans (strain SC5314 / ATCC MYA-2876) (Yeast).